The chain runs to 475 residues: MEIOTIC F-BOX protein MOF (475 aa).

A disordered region spans residues Met-1–Leu-58. Low complexity predominate over residues Ala-22–Ala-33. The F-box domain maps to Glu-55–Leu-91.

The protein belongs to the F-box protein family. FBX subfamily. Part of a SCF (SKP1-CUL1-F-box protein) E3 ubiquitin-protein ligase complex. Interacts (via F-box domain) directly with SKP1. As to expression, highly expressed in the stem, leaf and in the anther during meiosis. Weakly expressed in roots and lemma/palea.

It localises to the nucleus. The protein localises to the chromosome. The protein operates within protein modification; protein ubiquitination. Functionally, probable component of a SCF (SKP1-CULLIN-F-box protein) E3 ubiquitin-protein ligase complex and may function through the ubiquitin-mediated protein degradation or signaling pathway. Required for male meiotic prophase I progression. Required for telomere bouquet formation, homologous chromosome pairing and for the formation of the synaptonemal complex (SC), which stabilizes initial chromosomal axial associations and promotes crossover formation. Involved in meiotic DNA double-strand break (DSB) end-processing and repair, and is important in the recruitment of DSB repair proteins to the DSB sites. The sequence is that of MEIOTIC F-BOX protein MOF from Oryza sativa subsp. japonica (Rice).